Consider the following 484-residue polypeptide: Glucan endo-1,3-beta-glucosidase 5 (484 aa).

An N-terminal signal peptide occupies residues 1–26; the sequence is MLFKGVFAVFFVITLLYASLLIEVEG. A glycan (N-linked (GlcNAc...) asparagine) is linked at N102. E122 functions as the Proton donor in the catalytic mechanism. 2 N-linked (GlcNAc...) asparagine glycosylation sites follow: N129 and N260. Catalysis depends on E267, which acts as the Nucleophile. A disulfide bridge connects residues C366 and C428. N409 is a glycosylation site (N-linked (GlcNAc...) asparagine). A460 is lipidated: GPI-anchor amidated alanine. Positions 461–484 are cleaved as a propeptide — removed in mature form; sequence SAMMPITRSTAVLLLLSICLYIVL.

Belongs to the glycosyl hydrolase 17 family. Contains two additional disulfide bonds.

The protein localises to the cell membrane. The enzyme catalyses Hydrolysis of (1-&gt;3)-beta-D-glucosidic linkages in (1-&gt;3)-beta-D-glucans.. The polypeptide is Glucan endo-1,3-beta-glucosidase 5 (Arabidopsis thaliana (Mouse-ear cress)).